The primary structure comprises 441 residues: UDP-N-acetylmuramoylalanine--D-glutamate ligase (441 aa).

Position 113–119 (G113–T119) interacts with ATP.

It belongs to the MurCDEF family.

The protein localises to the cytoplasm. The catalysed reaction is UDP-N-acetyl-alpha-D-muramoyl-L-alanine + D-glutamate + ATP = UDP-N-acetyl-alpha-D-muramoyl-L-alanyl-D-glutamate + ADP + phosphate + H(+). It participates in cell wall biogenesis; peptidoglycan biosynthesis. Functionally, cell wall formation. Catalyzes the addition of glutamate to the nucleotide precursor UDP-N-acetylmuramoyl-L-alanine (UMA). This Alcanivorax borkumensis (strain ATCC 700651 / DSM 11573 / NCIMB 13689 / SK2) protein is UDP-N-acetylmuramoylalanine--D-glutamate ligase.